A 432-amino-acid chain; its full sequence is Putative D-alanyl-D-alanine carboxypeptidase (432 aa).

Residues 7–25 form a helical; Signal-anchor membrane-spanning segment; the sequence is ATVLLTFSLSAFAVEYPVL.

Belongs to the peptidase S12 family. YfeW subfamily.

It is found in the cell inner membrane. The catalysed reaction is Preferential cleavage: (Ac)2-L-Lys-D-Ala-|-D-Ala. Also transpeptidation of peptidyl-alanyl moieties that are N-acyl substituents of D-alanine.. This chain is Putative D-alanyl-D-alanine carboxypeptidase, found in Salmonella typhi.